Reading from the N-terminus, the 758-residue chain is Vitamin K-dependent gamma-carboxylase (758 aa).

The segment at 1-31 (MAVSARSARSPPDSDKVQKDKAGQTSGRRQG) is disordered. At Ala-2 the chain carries N-acetylalanine. The Cytoplasmic segment spans residues 2–60 (AVSARSARSPPDSDKVQKDKAGQTSGRRQGSRMGKLLGFEWTDVSSWGKLVTLLNRPTD). The segment covering 12–22 (PDSDKVQKDKA) has biased composition (basic and acidic residues). The helical transmembrane segment at 61-81 (PASLAVFRFLFGLMMVLDIPQ) threads the bilayer. Residues 82–113 (ERGLSSLDRRYLDGLEVCRFPLLDALQPLPLD) lie on the Lumenal side of the membrane. Cys-99 and Cys-450 are disulfide-bonded. The helical transmembrane segment at 114–134 (WMYLVYTIMFLGALGMMLGLR) threads the bilayer. The Cytoplasmic portion of the chain corresponds to 135–136 (YR). A helical transmembrane segment spans residues 137-157 (ISCVLFLLPYWYVFLLDKTSW). The Lumenal portion of the chain corresponds to 158-292 (NNHSYLYGLL…VSYFHCMNSQ (135 aa)). Residues 293-313 (LFSIGMFPYVMLASSPLFCSP) form a helical membrane-spanning segment. The Cytoplasmic segment spans residues 314 to 361 (EWPRKLVAHCPKRLQELLPLRTAPQPSASCVYKRSRAKGGQKPGLRHR). Residues 362-382 (LGAAFTLLYLLEQLFLPYSHF) form a helical membrane-spanning segment. The Lumenal portion of the chain corresponds to 383–758 (LTQGYNNWTN…PNADAVHSEF (376 aa)). A disordered region spans residues 727 to 758 (PFEPVGEPSPSNTDSSNPNPSEPNADAVHSEF). A compositionally biased stretch (low complexity) spans 734-750 (PSPSNTDSSNPNPSEPN).

It belongs to the vitamin K-dependent gamma-carboxylase family. In terms of assembly, monomer. May interact with CALU.

Its subcellular location is the endoplasmic reticulum membrane. It carries out the reaction 4-carboxy-L-glutamyl-[protein] + 2,3-epoxyphylloquinone + H2O + H(+) = phylloquinol + L-glutamyl-[protein] + CO2 + O2. Functionally, mediates the vitamin K-dependent carboxylation of glutamate residues to calcium-binding gamma-carboxyglutamate (Gla) residues with the concomitant conversion of the reduced hydroquinone form of vitamin K to vitamin K epoxide. Catalyzes gamma-carboxylation of various proteins, such as blood coagulation factors (F2, F7, F9 and F10), osteocalcin (BGLAP) or matrix Gla protein (MGP). This chain is Vitamin K-dependent gamma-carboxylase (GGCX), found in Delphinapterus leucas (Beluga whale).